Consider the following 221-residue polypeptide: Thiamine-phosphate synthase (221 aa).

4-amino-2-methyl-5-(diphosphooxymethyl)pyrimidine is bound by residues 44–48 (QFREK) and N79. Positions 80 and 99 each coordinate Mg(2+). S117 contacts 4-amino-2-methyl-5-(diphosphooxymethyl)pyrimidine. 143–145 (TRS) contacts 2-[(2R,5Z)-2-carboxy-4-methylthiazol-5(2H)-ylidene]ethyl phosphate. A 4-amino-2-methyl-5-(diphosphooxymethyl)pyrimidine-binding site is contributed by K146. Residues G175 and 195 to 196 (IS) each bind 2-[(2R,5Z)-2-carboxy-4-methylthiazol-5(2H)-ylidene]ethyl phosphate.

The protein belongs to the thiamine-phosphate synthase family. It depends on Mg(2+) as a cofactor.

It carries out the reaction 2-[(2R,5Z)-2-carboxy-4-methylthiazol-5(2H)-ylidene]ethyl phosphate + 4-amino-2-methyl-5-(diphosphooxymethyl)pyrimidine + 2 H(+) = thiamine phosphate + CO2 + diphosphate. It catalyses the reaction 2-(2-carboxy-4-methylthiazol-5-yl)ethyl phosphate + 4-amino-2-methyl-5-(diphosphooxymethyl)pyrimidine + 2 H(+) = thiamine phosphate + CO2 + diphosphate. The catalysed reaction is 4-methyl-5-(2-phosphooxyethyl)-thiazole + 4-amino-2-methyl-5-(diphosphooxymethyl)pyrimidine + H(+) = thiamine phosphate + diphosphate. It participates in cofactor biosynthesis; thiamine diphosphate biosynthesis; thiamine phosphate from 4-amino-2-methyl-5-diphosphomethylpyrimidine and 4-methyl-5-(2-phosphoethyl)-thiazole: step 1/1. Its function is as follows. Condenses 4-methyl-5-(beta-hydroxyethyl)thiazole monophosphate (THZ-P) and 2-methyl-4-amino-5-hydroxymethyl pyrimidine pyrophosphate (HMP-PP) to form thiamine monophosphate (TMP). The chain is Thiamine-phosphate synthase from Geobacillus thermodenitrificans (strain NG80-2).